The primary structure comprises 527 residues: uncharacterized protein (527 aa).

This is an uncharacterized protein from Schizosaccharomyces pombe (strain 972 / ATCC 24843) (Fission yeast).